The chain runs to 113 residues: Large ribosomal subunit protein bL19 (113 aa).

The protein belongs to the bacterial ribosomal protein bL19 family.

In terms of biological role, this protein is located at the 30S-50S ribosomal subunit interface and may play a role in the structure and function of the aminoacyl-tRNA binding site. This is Large ribosomal subunit protein bL19 from Mycolicibacterium smegmatis (strain ATCC 700084 / mc(2)155) (Mycobacterium smegmatis).